A 267-amino-acid polypeptide reads, in one-letter code: Thiamine pyrophosphokinase 2 (267 aa).

This sequence belongs to the thiamine pyrophosphokinase family.

The protein resides in the cytoplasm. It localises to the cytosol. The enzyme catalyses thiamine + ATP = thiamine diphosphate + AMP + H(+). Its pathway is cofactor biosynthesis; thiamine diphosphate biosynthesis; thiamine diphosphate from thiamine: step 1/1. Functionally, catalyzes the phosphorylation of thiamine to thiamine pyrophosphate (TPP). TPP is an active cofactor for enzymes involved in glycolysis and energy production. Plant leaves require high levels of TPP for photosynthesis and carbohydrate metabolism. This chain is Thiamine pyrophosphokinase 2 (TPK2), found in Oryza sativa subsp. japonica (Rice).